A 482-amino-acid polypeptide reads, in one-letter code: UDP-N-acetylmuramoyl-L-alanyl-D-glutamate--2,6-diaminopimelate ligase (482 aa).

Residues L28 and S30 each contribute to the UDP-N-acetyl-alpha-D-muramoyl-L-alanyl-D-glutamate site. 108 to 114 (GTNGKTT) provides a ligand contact to ATP. UDP-N-acetyl-alpha-D-muramoyl-L-alanyl-D-glutamate is bound by residues 150–151 (TT), S177, Q183, and R185. K217 carries the N6-carboxylysine modification. Residues R372, 396–399 (DNPR), G447, and E451 contribute to the meso-2,6-diaminopimelate site. A Meso-diaminopimelate recognition motif motif is present at residues 396-399 (DNPR).

The protein belongs to the MurCDEF family. MurE subfamily. It depends on Mg(2+) as a cofactor. Post-translationally, carboxylation is probably crucial for Mg(2+) binding and, consequently, for the gamma-phosphate positioning of ATP.

It localises to the cytoplasm. It carries out the reaction UDP-N-acetyl-alpha-D-muramoyl-L-alanyl-D-glutamate + meso-2,6-diaminopimelate + ATP = UDP-N-acetyl-alpha-D-muramoyl-L-alanyl-gamma-D-glutamyl-meso-2,6-diaminopimelate + ADP + phosphate + H(+). Its pathway is cell wall biogenesis; peptidoglycan biosynthesis. Functionally, catalyzes the addition of meso-diaminopimelic acid to the nucleotide precursor UDP-N-acetylmuramoyl-L-alanyl-D-glutamate (UMAG) in the biosynthesis of bacterial cell-wall peptidoglycan. The protein is UDP-N-acetylmuramoyl-L-alanyl-D-glutamate--2,6-diaminopimelate ligase of Aquifex aeolicus (strain VF5).